A 137-amino-acid chain; its full sequence is NADPH-dependent 7-cyano-7-deazaguanine reductase (137 aa).

The Thioimide intermediate role is filled by C45. The active-site Proton donor is the D52. Substrate contacts are provided by residues 68–70 and 87–88; these read VEL and QE.

The protein belongs to the GTP cyclohydrolase I family. QueF type 1 subfamily.

The protein resides in the cytoplasm. It carries out the reaction 7-aminomethyl-7-carbaguanine + 2 NADP(+) = 7-cyano-7-deazaguanine + 2 NADPH + 3 H(+). Its pathway is tRNA modification; tRNA-queuosine biosynthesis. In terms of biological role, catalyzes the NADPH-dependent reduction of 7-cyano-7-deazaguanine (preQ0) to 7-aminomethyl-7-deazaguanine (preQ1). This Thermotoga petrophila (strain ATCC BAA-488 / DSM 13995 / JCM 10881 / RKU-1) protein is NADPH-dependent 7-cyano-7-deazaguanine reductase.